A 2694-amino-acid chain; its full sequence is Teneurin-3 (2694 aa).

3 disordered regions span residues 1–45 (MDVK…SSSE), 106–132 (PSSL…DNQS), and 161–198 (TQPA…PSVT). The Teneurin N-terminal domain maps to 1 to 306 (MDVKERRPYC…KSSKYCSWRC (306 aa)). Residues 1 to 312 (MDVKERRPYC…SWRCTALSAM (312 aa)) are Cytoplasmic-facing. Positions 163-184 (PAPSHSCNEQPSNQHQQGQSTL) are enriched in polar residues. A helical transmembrane segment spans residues 313–333 (AVSILLSVLLCYCIAMHLFGL). Over 334–2694 (NWQLQETEGY…FLRQSEIGKR (2361 aa)) the chain is Extracellular. 2 N-linked (GlcNAc...) asparagine glycosylation sites follow: asparagine 374 and asparagine 413. 8 consecutive EGF-like domains span residues 508–539 (TLTE…PDCS), 540–570 (RAAC…TECD), 572–604 (PSNQ…DNCE), 605–636 (EVDC…NNCE), 638–671 (LKTM…PDCS), 672–703 (IEVC…VCDL), 704–733 (KACH…EHCT), and 734–768 (VEGC…AGCD). 22 cysteine pairs are disulfide-bonded: cysteine 512/cysteine 522, cysteine 516/cysteine 527, cysteine 529/cysteine 538, cysteine 547/cysteine 558, cysteine 560/cysteine 569, cysteine 576/cysteine 587, cysteine 581/cysteine 592, cysteine 594/cysteine 603, cysteine 608/cysteine 619, cysteine 613/cysteine 624, cysteine 626/cysteine 635, cysteine 646/cysteine 659, cysteine 661/cysteine 670, cysteine 675/cysteine 685, cysteine 679/cysteine 690, cysteine 692/cysteine 701, cysteine 706/cysteine 716, cysteine 710/cysteine 721, cysteine 723/cysteine 732, cysteine 737/cysteine 747, cysteine 741/cysteine 756, and cysteine 758/cysteine 767. The N-linked (GlcNAc...) asparagine glycan is linked to asparagine 664. Residues asparagine 854, asparagine 877, and asparagine 1048 are each glycosylated (N-linked (GlcNAc...) asparagine). NHL repeat units follow at residues 1166–1192 (LLAP…RRIF), 1194–1238 (SGNV…PKAL), 1264–1308 (ARCG…NGII), 1325–1365 (CDNS…ITEN), and 1452–1495 (CYQT…IRHN). An N-linked (GlcNAc...) asparagine glycan is attached at asparagine 1196. The stretch at 1505–1524 (FEVASPASQELYVFDSNGTH) is one YD 1 repeat. N-linked (GlcNAc...) asparagine glycans are attached at residues asparagine 1521 and asparagine 1538. YD repeat units follow at residues 1541-1561 (YSNE…LRVR), 1604-1623 (YHGN…WTTF), and 1624-1646 (YDYD…TSLI). Asparagine 1634, asparagine 1671, asparagine 1729, and asparagine 1814 each carry an N-linked (GlcNAc...) asparagine glycan. 18 YD repeats span residues 1817–1836 (YSST…ERVE), 1858–1876 (YLDK…YIFD), 1877–1897 (YDLQ…HTMQ), 1904–1921 (YYRN…VTVD), 1922–1943 (YSED…VLYK), 1944–1961 (YRRQ…TRVS), 1964–1984 (YDET…FICS), 1987–2007 (YRQI…DGMV), 2015–2034 (YDNS…TPLP), 2040–2057 (FDDI…GVIY), 2058–2084 (YDIN…IKEI), 2086–2099 (YEIF…ITIQ), 2100–2123 (YDNM…TKYG), 2126–2146 (YDVD…WRYN), 2147–2167 (YDLN…LTPL), 2169–2189 (YDLR…DEDG), 2201–2221 (YNSK…TIQY), and 2223–2243 (YDGL…LQFF). An N-linked (GlcNAc...) asparagine glycan is attached at asparagine 1915. Asparagine 2118 is a glycosylation site (N-linked (GlcNAc...) asparagine). N-linked (GlcNAc...) asparagine glycosylation is present at asparagine 2258. A YD 23 repeat occupies 2269–2310 (YDLQGHLFAMEISSGEEFYIACDNTGTPLAVFSSNGLLLKQV). An N-linked (GlcNAc...) asparagine glycan is attached at asparagine 2571.

This sequence belongs to the tenascin family. Teneurin subfamily. As to quaternary structure, homodimer; disulfide-linked; to mediate homophilic cell adhesion. As to expression, expressed by retinal ganglion cells and their presynaptic amacrine and postsynaptic tectal cell targets.

The protein resides in the cell membrane. Its subcellular location is the cell projection. The protein localises to the axon. Its function is as follows. Involved in neural development by regulating the establishment of proper connectivity within the nervous system. Acts in both pre- and postsynaptic neurons in the hippocampus to control the assembly of a precise topographic projection: required in both CA1 and subicular neurons for the precise targeting of proximal CA1 axons to distal subiculum, probably by promoting homophilic cell adhesion. Required by retinal ganglion cells for acquisition of their correct morphological and functional connectivity, thereby playing a key role in the development of the visual pathway. In Danio rerio (Zebrafish), this protein is Teneurin-3 (tenm3).